The primary structure comprises 541 residues: Chaperonin GroEL 1 (541 aa).

ATP-binding positions include 30–33 (TLGP), 87–91 (DGTTT), glycine 414, 478–480 (NAA), and aspartate 494.

The protein belongs to the chaperonin (HSP60) family. In terms of assembly, forms a cylinder of 14 subunits composed of two heptameric rings stacked back-to-back. Interacts with the co-chaperonin GroES.

It localises to the cytoplasm. The catalysed reaction is ATP + H2O + a folded polypeptide = ADP + phosphate + an unfolded polypeptide.. Functionally, together with its co-chaperonin GroES, plays an essential role in assisting protein folding. The GroEL-GroES system forms a nano-cage that allows encapsulation of the non-native substrate proteins and provides a physical environment optimized to promote and accelerate protein folding. The protein is Chaperonin GroEL 1 of Thermobifida fusca (strain YX).